Here is a 165-residue protein sequence, read N- to C-terminus: Glycine cleavage system H protein, mitochondrial (165 aa).

A mitochondrion-targeting transit peptide spans 1–34 (MALRMWASSTANALKLSSSSRLHLSPTFSISRCF). One can recognise a Lipoyl-binding domain in the interval 56–138 (VATIGITDHA…YEDGWMIKIK (83 aa)). K97 is subject to N6-lipoyllysine.

The protein belongs to the GcvH family. The glycine cleavage system is composed of four proteins: P, T, L and H. The cofactor is (R)-lipoate.

The protein resides in the mitochondrion. In terms of biological role, the glycine cleavage system catalyzes the degradation of glycine. The H protein shuttles the methylamine group of glycine from the P protein to the T protein. In Pisum sativum (Garden pea), this protein is Glycine cleavage system H protein, mitochondrial (GDCSH).